Consider the following 93-residue polypeptide: MEHGEKNITIVDDQGNEQLCEVLFTFENEEFGKSYVLYYPIESKDDEEVEILASSFTPNEDGENGELFPIETDEEWDMIEETLNTFLADEDEE.

The protein belongs to the UPF0473 family.

The protein is UPF0473 protein YrzB (yrzB) of Bacillus subtilis (strain 168).